Reading from the N-terminus, the 334-residue chain is MKEIIAKLADFKDLSSAEMTDVIERIVTGQVAESQIAALLLGLKMKGETIEERTALAQVMRGHAKQIPTTIRTAMDNCGTGGDKSFSFNISTTAAFVLAGGGIKMAKHGNRSISSKSGSADVLEALGINLDLDATSLGKVFEQTGIVFLFAKNMHPAMKYIMPARLSLGIPTIMNLTGPLIHPMNLETQLLGTSRPDMLESTAEVLKNMGRKRAVVVSGPDGLDEAGLHGRTQYALLENGQISLHSFLPSDIGMKEIPLEAIRGGNAKENAEILLSVLQNQASPYLETTVLNAGLGFYANGKSDSIEEGIALARQVIASGAAYEKLKQLQEYQK.

Residues G79, 82-83, S87, 89-92, 107-115, and S119 each bind 5-phospho-alpha-D-ribose 1-diphosphate; these read GD, NIST, and KHGNRSISS. G79 lines the anthranilate pocket. Mg(2+) is bound at residue S91. N110 is an anthranilate binding site. R165 is a binding site for anthranilate. Mg(2+) contacts are provided by D224 and E225.

The protein belongs to the anthranilate phosphoribosyltransferase family. As to quaternary structure, homodimer. Mg(2+) is required as a cofactor.

It carries out the reaction N-(5-phospho-beta-D-ribosyl)anthranilate + diphosphate = 5-phospho-alpha-D-ribose 1-diphosphate + anthranilate. It participates in amino-acid biosynthesis; L-tryptophan biosynthesis; L-tryptophan from chorismate: step 2/5. In terms of biological role, catalyzes the transfer of the phosphoribosyl group of 5-phosphorylribose-1-pyrophosphate (PRPP) to anthranilate to yield N-(5'-phosphoribosyl)-anthranilate (PRA). In Streptococcus gordonii (strain Challis / ATCC 35105 / BCRC 15272 / CH1 / DL1 / V288), this protein is Anthranilate phosphoribosyltransferase.